Reading from the N-terminus, the 1919-residue chain is Protein TIC 214 (1919 aa).

Transmembrane regions (helical) follow at residues I18–G38, F67–L87, P90–H110, L127–L147, V175–I195, and I224–I244. Disordered regions lie at residues K250–K375, I1107–S1129, and E1606–V1636. 5 stretches are compositionally biased toward acidic residues: residues G259–I269, G278–I288, G297–I307, G316–T328, and E355–E366. Residues I1107–G1117 show a composition bias toward basic residues. The span at E1606 to L1623 shows a compositional bias: basic and acidic residues. Residues D1626 to V1636 are compositionally biased toward polar residues.

Belongs to the TIC214 family. In terms of assembly, part of the Tic complex.

Its subcellular location is the plastid. The protein localises to the chloroplast inner membrane. In terms of biological role, involved in protein precursor import into chloroplasts. May be part of an intermediate translocation complex acting as a protein-conducting channel at the inner envelope. In Panax ginseng (Korean ginseng), this protein is Protein TIC 214.